Here is a 116-residue protein sequence, read N- to C-terminus: Peptidyl-tRNA hydrolase (116 aa).

The protein belongs to the PTH2 family.

The protein resides in the cytoplasm. It catalyses the reaction an N-acyl-L-alpha-aminoacyl-tRNA + H2O = an N-acyl-L-amino acid + a tRNA + H(+). The natural substrate for this enzyme may be peptidyl-tRNAs which drop off the ribosome during protein synthesis. This chain is Peptidyl-tRNA hydrolase, found in Methanococcus vannielii (strain ATCC 35089 / DSM 1224 / JCM 13029 / OCM 148 / SB).